Consider the following 400-residue polypeptide: Putative C-type lectin domain family 20 member A (400 aa).

A signal peptide spans 1-20; that stretch reads MLPRALLLSFCAAALQLVSS. C-type lectin domains follow at residues 26-131 and 159-275; these read LVKE…FLCY and ISGQ…FFCF. Intrachain disulfides connect cysteine 40-cysteine 130, cysteine 105-cysteine 122, cysteine 180-cysteine 274, and cysteine 248-cysteine 266. Positions 287-346 are disordered; that stretch reads ELPPLFHTSPTEMTEETTPRPGRAVASVGSGTDRRDTAAATEAQHLSSESKEKTSAQKSG.

This chain is Putative C-type lectin domain family 20 member A, found in Homo sapiens (Human).